Reading from the N-terminus, the 322-residue chain is MSTEFEKKMEEHIDSCSLEQLRDILVNKNGDAKLTNRFRALFNLKCVAEEFAQRPEEAQRAVEYICEAFADSSELLKHEVAYVLGQTGNLACAATLREVMLDHAQQCMVRHEASEALGALGDAASLGALERSRREDPSEEVRQTSELAIERIRWQASGAAATEQLQQSLYSSVDPAPPLSLEKDYDVPQLQALLNDQRAPLFERYRAMFRLRDIGSDEACYALASGFDDPSALFKHEIAYVFGQIGNPCVVPHLQEVLKREHEAPMVRHEAAEALGSIATDDVLPVLKRHLQDKDEVVRESAAIALDMYDYENSNELEYAPA.

HEAT-like PBS-type repeat units lie at residues 76–102 (LKHEVAYVLGQTGNLACAATLREVMLD), 109–135 (VRHEASEALGALGDAASLGALERSRRE), 234–260 (FKHEIAYVFGQIGNPCVVPHLQEVLKR), and 267–293 (VRHEAAEALGSIATDDVLPVLKRHLQD). Residues H78, E79, H111, E112, H236, E237, H269, and E270 each contribute to the Fe cation site.

The protein belongs to the deoxyhypusine hydroxylase family. It depends on Fe(2+) as a cofactor.

Its subcellular location is the cytoplasm. The protein localises to the nucleus. The enzyme catalyses [eIF5A protein]-deoxyhypusine + AH2 + O2 = [eIF5A protein]-hypusine + A + H2O. Its pathway is protein modification; eIF5A hypusination. Catalyzes the hydroxylation of the N(6)-(4-aminobutyl)-L-lysine intermediate to form hypusine, an essential post-translational modification only found in mature eIF-5A factor. The polypeptide is Deoxyhypusine hydroxylase (Eremothecium gossypii (strain ATCC 10895 / CBS 109.51 / FGSC 9923 / NRRL Y-1056) (Yeast)).